Here is a 411-residue protein sequence, read N- to C-terminus: Adenylosuccinate synthetase (411 aa).

GTP is bound by residues 11–17 (GDEGKGK) and 39–41 (GHT). The active-site Proton acceptor is the aspartate 12. Residues aspartate 12 and glycine 39 each contribute to the Mg(2+) site. Residues 12–15 (DEGK), 37–40 (NAGH), threonine 121, arginine 135, glutamine 215, threonine 230, and arginine 294 contribute to the IMP site. Catalysis depends on histidine 40, which acts as the Proton donor. 290–296 (TTTKRPR) contacts substrate. GTP is bound by residues arginine 296, 322–324 (KLD), and 400–402 (STS).

The protein belongs to the adenylosuccinate synthetase family. Homodimer. It depends on Mg(2+) as a cofactor.

It is found in the cytoplasm. It catalyses the reaction IMP + L-aspartate + GTP = N(6)-(1,2-dicarboxyethyl)-AMP + GDP + phosphate + 2 H(+). Its pathway is purine metabolism; AMP biosynthesis via de novo pathway; AMP from IMP: step 1/2. Functionally, plays an important role in the de novo pathway of purine nucleotide biosynthesis. Catalyzes the first committed step in the biosynthesis of AMP from IMP. The protein is Adenylosuccinate synthetase of Helicobacter pylori (strain G27).